The following is a 446-amino-acid chain: Tubulin beta-1 chain (446 aa).

GTP-binding residues include Gln-11, Glu-69, Ser-138, Gly-142, Thr-143, Gly-144, Asn-204, and Asn-226. Position 69 (Glu-69) interacts with Mg(2+). The interval 422 to 446 (YQQYQDATADEEGEYEDEEEGDLQD) is disordered. A compositionally biased stretch (acidic residues) spans 429 to 446 (TADEEGEYEDEEEGDLQD).

This sequence belongs to the tubulin family. As to quaternary structure, dimer of alpha and beta chains. A typical microtubule is a hollow water-filled tube with an outer diameter of 25 nm and an inner diameter of 15 nM. Alpha-beta heterodimers associate head-to-tail to form protofilaments running lengthwise along the microtubule wall with the beta-tubulin subunit facing the microtubule plus end conferring a structural polarity. Microtubules usually have 13 protofilaments but different protofilament numbers can be found in some organisms and specialized cells. It depends on Mg(2+) as a cofactor. In terms of tissue distribution, found in areas of rapidly dividing tissues.

The protein localises to the cytoplasm. Its subcellular location is the cytoskeleton. Its function is as follows. Tubulin is the major constituent of microtubules, a cylinder consisting of laterally associated linear protofilaments composed of alpha- and beta-tubulin heterodimers. Microtubules grow by the addition of GTP-tubulin dimers to the microtubule end, where a stabilizing cap forms. Below the cap, tubulin dimers are in GDP-bound state, owing to GTPase activity of alpha-tubulin. The chain is Tubulin beta-1 chain (TUBB1) from Zea mays (Maize).